The sequence spans 375 residues: CC-adding tRNA nucleotidyltransferase (375 aa).

CTP is bound at residue 27–30; the sequence is GAVR. Mg(2+)-binding residues include D40 and D42. CTP-binding positions include 95-96, N100, 137-146, and R177; these read RD and DPLRMLRAPR.

Belongs to the tRNA nucleotidyltransferase/poly(A) polymerase family. It depends on Mg(2+) as a cofactor.

It carries out the reaction a tRNA precursor + 2 CTP = a tRNA with a 3' CC end + 2 diphosphate. Functionally, tRNA nucleotidyltransferase involved in the synthesis of the tRNA CCA terminus. Adds the two cytidine residues to tRNA. This is CC-adding tRNA nucleotidyltransferase from Halalkalibacterium halodurans (strain ATCC BAA-125 / DSM 18197 / FERM 7344 / JCM 9153 / C-125) (Bacillus halodurans).